The following is a 254-amino-acid chain: 2,3-bisphosphoglycerate-dependent phosphoglycerate mutase (254 aa).

Residues 15–22, 28–29, Arg-67, 94–97, Lys-105, 121–122, and 188–189 each bind substrate; these read RHGQSEWN, TG, ERHY, RR, and GN. Residue His-16 is the Tele-phosphohistidine intermediate of the active site. Residue Glu-94 is the Proton donor/acceptor of the active site.

It belongs to the phosphoglycerate mutase family. BPG-dependent PGAM subfamily.

The catalysed reaction is (2R)-2-phosphoglycerate = (2R)-3-phosphoglycerate. Its pathway is carbohydrate degradation; glycolysis; pyruvate from D-glyceraldehyde 3-phosphate: step 3/5. Catalyzes the interconversion of 2-phosphoglycerate and 3-phosphoglycerate. This Corynebacterium jeikeium (strain K411) protein is 2,3-bisphosphoglycerate-dependent phosphoglycerate mutase.